The following is a 1228-amino-acid chain: Reverse gyrase (1228 aa).

An RG N-terminal-type zinc finger spans residues 1-41 (MEVPLVAYLHSCPNCGGPITSDRLASGLPCRECLPDGAKAG). Positions 12, 15, 30, and 33 each coordinate Zn(2+). Residues Q88 and 105–112 (APTGSGKT) contribute to the ATP site. The 164-residue stretch at 92 to 255 (ARRFVRGKSF…NLTKQLRKAE (164 aa)) folds into the Helicase ATP-binding domain. The short motif at 211–214 (DDVD) is the DEAD box element. The segment at 631–1228 (DLMRTILMVV…RKEVLPHLAS (598 aa)) is topoisomerase I. One can recognise a Toprim domain in the interval 635–809 (TILMVVESPT…DIRRVEFHEV (175 aa)). Residues E641 and D778 each coordinate Mg(2+). Positions 825–1223 (NFSLVKAQIV…LYDEFRKEVL (399 aa)) constitute a Topo IA-type catalytic domain. The O-(5'-phospho-DNA)-tyrosine intermediate role is filled by Y967.

The protein in the N-terminal section; belongs to the DEAD box helicase family. DDVD subfamily. In the C-terminal section; belongs to the type IA topoisomerase family. Monomer. It depends on Zn(2+) as a cofactor. Mg(2+) serves as cofactor.

It is found in the cytoplasm. It catalyses the reaction ATP + H2O = ADP + phosphate + H(+). In terms of biological role, modifies the topological state of DNA by introducing positive supercoils in an ATP-dependent process, increasing the linking number in steps of +1. Binds to single-stranded DNA, transiently cleaves and then rejoins the ends, introducing a positive supercoil in the process. The scissile phosphodiester is attacked by the catalytic tyrosine of the enzyme, resulting in the formation of a DNA-(5'-phosphotyrosyl)-enzyme intermediate. Probably involved in rewinding DNA strands in regions of the chromosome that have opened up to allow replication, transcription, DNA repair and/or for DNA protection. This chain is Reverse gyrase, found in Pyrobaculum aerophilum (strain ATCC 51768 / DSM 7523 / JCM 9630 / CIP 104966 / NBRC 100827 / IM2).